The chain runs to 381 residues: Queuine tRNA-ribosyltransferase (381 aa).

The active-site Proton acceptor is the aspartate 92. Residues 92-96 (DSGGF), aspartate 146, glutamine 190, and glycine 217 contribute to the substrate site. The RNA binding stretch occupies residues 248-254 (GVGRPED). Aspartate 267 (nucleophile) is an active-site residue. The tract at residues 272–276 (TRNAR) is RNA binding; important for wobble base 34 recognition. Cysteine 305, cysteine 307, cysteine 310, and histidine 337 together coordinate Zn(2+).

This sequence belongs to the queuine tRNA-ribosyltransferase family. In terms of assembly, homodimer. Within each dimer, one monomer is responsible for RNA recognition and catalysis, while the other monomer binds to the replacement base PreQ1. Zn(2+) serves as cofactor.

It carries out the reaction 7-aminomethyl-7-carbaguanine + guanosine(34) in tRNA = 7-aminomethyl-7-carbaguanosine(34) in tRNA + guanine. Its pathway is tRNA modification; tRNA-queuosine biosynthesis. Functionally, catalyzes the base-exchange of a guanine (G) residue with the queuine precursor 7-aminomethyl-7-deazaguanine (PreQ1) at position 34 (anticodon wobble position) in tRNAs with GU(N) anticodons (tRNA-Asp, -Asn, -His and -Tyr). Catalysis occurs through a double-displacement mechanism. The nucleophile active site attacks the C1' of nucleotide 34 to detach the guanine base from the RNA, forming a covalent enzyme-RNA intermediate. The proton acceptor active site deprotonates the incoming PreQ1, allowing a nucleophilic attack on the C1' of the ribose to form the product. After dissociation, two additional enzymatic reactions on the tRNA convert PreQ1 to queuine (Q), resulting in the hypermodified nucleoside queuosine (7-(((4,5-cis-dihydroxy-2-cyclopenten-1-yl)amino)methyl)-7-deazaguanosine). The polypeptide is Queuine tRNA-ribosyltransferase (Xanthomonas euvesicatoria pv. vesicatoria (strain 85-10) (Xanthomonas campestris pv. vesicatoria)).